We begin with the raw amino-acid sequence, 482 residues long: Protein farnesyltransferase subunit beta (482 aa).

4 PFTB repeats span residues 131–172 (ESNA…VTLG), 182–223 (REKM…SILN), 230–271 (TQGL…ILIN), and 278–319 (LDSL…VLLQ). (2E,6E)-farnesyl diphosphate is bound by residues 256–259 (HGGY) and 298–301 (RTNK). The Zn(2+) site is built by Asp-304 and Cys-306. (2E,6E)-farnesyl diphosphate is bound at residue 307-310 (YTFW). The tract at residues 329–372 (VHGSSHISEGTNEEHHAHDEDDLEDSDDDDDSDEDNDEDSVNGH) is disordered. Residues 348–368 (EDDLEDSDDDDDSDEDNDEDS) are compositionally biased toward acidic residues. The stretch at 391–433 (SLGLQRYVLLCSKIPDGGFRDKPRKPRDFYHTCYCLSGLSVAQ) is one PFTB 5 repeat. His-421 lines the Zn(2+) pocket.

This sequence belongs to the protein prenyltransferase subunit beta family. In terms of assembly, heterodimer of FTA and FTB (farnesyltransferase). Heterodimer of an alpha and a beta subunit. The cofactor is Zn(2+).

The catalysed reaction is L-cysteinyl-[protein] + (2E,6E)-farnesyl diphosphate = S-(2E,6E)-farnesyl-L-cysteinyl-[protein] + diphosphate. Catalyzes the transfer of a farnesyl moiety from farnesyl diphosphate to a cysteine at the fourth position from the C-terminus of several proteins having the C-terminal sequence Cys-aliphatic-aliphatic-X (CaaX). The beta subunit is responsible for peptide-binding. Acts as an abscisic acid (ABA) negative regulator by mediating ASG2 farnesylation and consequently monitoring its subcellular localization. Involved in responses to salt (NaCl) and osmotic (e.g. in response to mannitol and PEG) stresses. This chain is Protein farnesyltransferase subunit beta (FTB), found in Arabidopsis thaliana (Mouse-ear cress).